Consider the following 37-residue polypeptide: Large ribosomal subunit protein bL36 (37 aa).

This sequence belongs to the bacterial ribosomal protein bL36 family.

This is Large ribosomal subunit protein bL36 from Symbiobacterium thermophilum (strain DSM 24528 / JCM 14929 / IAM 14863 / T).